Here is a 408-residue protein sequence, read N- to C-terminus: Acetate kinase (408 aa).

N7 is a binding site for Mg(2+). An ATP-binding site is contributed by K14. R91 contributes to the substrate binding site. The active-site Proton donor/acceptor is D148. ATP contacts are provided by residues 208–212 (HLGNG), 283–285 (DFR), and 331–335 (GIGEN). E384 is a Mg(2+) binding site.

The protein belongs to the acetokinase family. As to quaternary structure, homodimer. Requires Mg(2+) as cofactor. The cofactor is Mn(2+).

It localises to the cytoplasm. The catalysed reaction is acetate + ATP = acetyl phosphate + ADP. The protein operates within metabolic intermediate biosynthesis; acetyl-CoA biosynthesis; acetyl-CoA from acetate: step 1/2. In terms of biological role, catalyzes the formation of acetyl phosphate from acetate and ATP. Can also catalyze the reverse reaction. This is Acetate kinase from Methanosarcina mazei (strain ATCC BAA-159 / DSM 3647 / Goe1 / Go1 / JCM 11833 / OCM 88) (Methanosarcina frisia).